A 142-amino-acid chain; its full sequence is Multiprotein-bridging factor 1a (142 aa).

The segment covering 51–64 has biased composition (polar residues); the sequence is GTNKAASSGTSLNT. Residues 51 to 77 form a disordered region; sequence GTNKAASSGTSLNTKMLDDDTENLTHE. The HTH cro/C1-type domain occupies 87 to 141; it reads IMQARTDKKLTQSQLAQIINEKPQVIQEYESGKAIPNQQILSKLERALGAKLRGK. The H-T-H motif DNA-binding region spans 98–117; the sequence is QSQLAQIINEKPQVIQEYES.

Belongs to the MBF1 family. In terms of tissue distribution, expressed in leaves, roots, stems, flowers, siliques and shoots. Detected only in anthers and some seeds in siliques.

It localises to the nucleus. It is found in the nucleolus. Functionally, transcriptional coactivator that stimulates transcriptional activity by bridging regulatory proteins and TBP, thereby recruiting TBP to promoters occupied by DNA-binding regulators. This Arabidopsis thaliana (Mouse-ear cress) protein is Multiprotein-bridging factor 1a (MBF1A).